The primary structure comprises 102 residues: Large ribosomal subunit protein bL21 (102 aa).

Over residues 79 to 91 the composition is skewed to basic residues; sequence RKDSKRKKGHRQP. The segment at 79 to 102 is disordered; that stretch reads RKDSKRKKGHRQPYTKLTIDKINA.

The protein belongs to the bacterial ribosomal protein bL21 family. As to quaternary structure, part of the 50S ribosomal subunit. Contacts protein L20.

Its function is as follows. This protein binds to 23S rRNA in the presence of protein L20. This Staphylococcus saprophyticus subsp. saprophyticus (strain ATCC 15305 / DSM 20229 / NCIMB 8711 / NCTC 7292 / S-41) protein is Large ribosomal subunit protein bL21.